Consider the following 512-residue polypeptide: Sucrose transport protein SUC2 (512 aa).

Topologically, residues 1 to 31 (MVSHPMEKAANGASALETQTGELDQPERLRK) are cytoplasmic. The chain crosses the membrane as a helical span at residues 32-52 (IISVSSIAAGVQFGWALQLSL). Residues 53–65 (LTPYVQLLGIPHK) lie on the Extracellular side of the membrane. Residues 66 to 86 (WASLIWLCGPISGMLVQPIVG) form a helical membrane-spanning segment. Residues 87–100 (YHSDRCTSRFGRRR) are Cytoplasmic-facing. Residues 101-121 (PFIVAGAGLVTVAVFLIGYAA) form a helical membrane-spanning segment. At 122 to 138 (DIGHSMGDQLDKPPKTR) the chain is on the extracellular side. The chain crosses the membrane as a helical span at residues 139-159 (AIAIFALGFWILDVANNTLQG). Topologically, residues 160-177 (PCRAFLADLSAGNAKKTR) are cytoplasmic. The helical transmembrane segment at 178–198 (TANAFFSFFMAVGNVLGYAAG) threads the bilayer. At 199–223 (SYRNLYKVVPFTMTESCDLYCANLK) the chain is on the extracellular side. A helical transmembrane segment spans residues 224-244 (TCFFLSITLLLIVTFVSLCYV). Over 245–278 (KEKPWTPEPTADGKASNVPFFGEIFGAFKELKRP) the chain is Cytoplasmic. The chain crosses the membrane as a helical span at residues 279 to 299 (MWMLLIVTALNWIAWFPFLLF). Residues 300–332 (DTDWMGREVYGGNSDATATAASKKLYNDGVRAG) are Extracellular-facing. A helical membrane pass occupies residues 333–353 (ALGLMLNAIVLGFMSLGVEWI). Over 354-362 (GRKLGGAKR) the chain is Cytoplasmic. Residues 363–383 (LWGIVNFILAICLAMTVVVTK) form a helical membrane-spanning segment. The Extracellular portion of the chain corresponds to 384–407 (QAENHRRDHGGAKTGPPGNVTAGA). An N-linked (GlcNAc...) asparagine glycan is attached at asparagine 402. The chain crosses the membrane as a helical span at residues 408-428 (LTLFAILGIPQAITFSIPFAL). Topologically, residues 429 to 440 (ASIFSTNSGAGQ) are cytoplasmic. The chain crosses the membrane as a helical span at residues 441-461 (GLSLGVLNLAIVVPQMVISVG). Over 462-473 (GGPFDELFGGGN) the chain is Extracellular. A helical transmembrane segment spans residues 474–494 (IPAFVLGAIAAAVSGVLALTV). At 495–512 (LPSPPPDAPAFKATMGFH) the chain is on the cytoplasmic side.

This sequence belongs to the glycoside-pentoside-hexuronide (GPH) cation symporter transporter (TC 2.A.2.4) family. In terms of assembly, homodimer. Interacts with SUC3 and SUC4. As to expression, expressed in leaves and, to a lower extent, in roots, flowers and stems. Highly specific to the phloem, exclusively localized in companion cells (at protein level).

It localises to the cell membrane. It catalyses the reaction sucrose(out) + H(+)(out) = sucrose(in) + H(+)(in). It participates in glycan biosynthesis; sucrose metabolism. With respect to regulation, inhibited by protonophores (e.g. dinitrophenol and carbonyl cyanide m-chlorophenyl-hydrazone (CCCP)) and SH group inhibitors (e.g. N-ethylmaleimide (NEM) and p-chloromercuriphenyl sulphonic acid (PCMPS)). Functionally, responsible for the transport of sucrose into the cell, with the concomitant uptake of protons (symport system). Can also transport other glucosides such as maltose, arbutin (hydroquinone-beta-D-glucoside), salicin (2-(hydroxymethyl)phenyl-beta-D-glucoside), alpha-phenylglucoside, beta-phenylglucoside, alpha-paranitrophenylglucoside, beta-paranitrophenylglucoside, and paranitrophenyl-beta-thioglucoside. May also transport biotin. Required for apoplastic phloem sucrose loading in source tissues (e.g. leaves) in order to transport it to sink tissues (e.g. roots, flowers). This Arabidopsis thaliana (Mouse-ear cress) protein is Sucrose transport protein SUC2.